A 137-amino-acid polypeptide reads, in one-letter code: Nucleoside diphosphate kinase (137 aa).

ATP-binding residues include Lys9, Phe57, Arg85, Thr91, Arg102, and Asn112. Residue His115 is the Pros-phosphohistidine intermediate of the active site.

This sequence belongs to the NDK family. Homotetramer. Mg(2+) is required as a cofactor.

The protein localises to the cytoplasm. The catalysed reaction is a 2'-deoxyribonucleoside 5'-diphosphate + ATP = a 2'-deoxyribonucleoside 5'-triphosphate + ADP. The enzyme catalyses a ribonucleoside 5'-diphosphate + ATP = a ribonucleoside 5'-triphosphate + ADP. Major role in the synthesis of nucleoside triphosphates other than ATP. The ATP gamma phosphate is transferred to the NDP beta phosphate via a ping-pong mechanism, using a phosphorylated active-site intermediate. This chain is Nucleoside diphosphate kinase, found in Leptospira interrogans serogroup Icterohaemorrhagiae serovar Lai (strain 56601).